Reading from the N-terminus, the 330-residue chain is Beta-ketoacyl-[acyl-carrier-protein] synthase III (330 aa).

Active-site residues include C114 and H254. The ACP-binding stretch occupies residues Q255–R259. N284 is an active-site residue.

Belongs to the thiolase-like superfamily. FabH family. In terms of assembly, homodimer.

It localises to the cytoplasm. It carries out the reaction malonyl-[ACP] + acetyl-CoA + H(+) = 3-oxobutanoyl-[ACP] + CO2 + CoA. Its pathway is lipid metabolism; fatty acid biosynthesis. Functionally, catalyzes the condensation reaction of fatty acid synthesis by the addition to an acyl acceptor of two carbons from malonyl-ACP. Catalyzes the first condensation reaction which initiates fatty acid synthesis and may therefore play a role in governing the total rate of fatty acid production. Possesses both acetoacetyl-ACP synthase and acetyl transacylase activities. Its substrate specificity determines the biosynthesis of branched-chain and/or straight-chain of fatty acids. The chain is Beta-ketoacyl-[acyl-carrier-protein] synthase III from Roseiflexus castenholzii (strain DSM 13941 / HLO8).